The primary structure comprises 153 residues: MRCPFCGHDDTQVKDSRPTEDNSAIRRRRSCPECGSRFTTFERVQIRDLVVIKKDGGRSPFDRDKVLKSLRIALRKRPVDDEQIERIVNGIHRRLESMGENEVPSKFIGELVMEVLMDLDKVAYVRYASVYRNFREAKDFEDFLGKMVVPRLD.

The disordered stretch occupies residues 1–26; the sequence is MRCPFCGHDDTQVKDSRPTEDNSAIR. Residues 3–34 fold into a zinc finger; the sequence is CPFCGHDDTQVKDSRPTEDNSAIRRRRSCPEC. A compositionally biased stretch (basic and acidic residues) spans 7-24; that stretch reads GHDDTQVKDSRPTEDNSA. Residues 49-139 enclose the ATP-cone domain; it reads LVVIKKDGGR…VYRNFREAKD (91 aa).

This sequence belongs to the NrdR family. Requires Zn(2+) as cofactor.

Negatively regulates transcription of bacterial ribonucleotide reductase nrd genes and operons by binding to NrdR-boxes. The sequence is that of Transcriptional repressor NrdR 3 from Paramagnetospirillum magneticum (strain ATCC 700264 / AMB-1) (Magnetospirillum magneticum).